Reading from the N-terminus, the 339-residue chain is Retroviral-like aspartic protease 1 (339 aa).

Residues methionine 1 to asparagine 188 constitute a propeptide that is removed on maturation. The segment at valine 34 to proline 53 is disordered. Polar residues predominate over residues phenylalanine 38–proline 53. Asparagine 39 is a glycosylation site (N-linked (GlcNAc...) asparagine). The chain crosses the membrane as a helical span at residues leucine 55–alanine 75. Positions valine 205–valine 286 constitute a Peptidase A2 domain. Aspartate 210 is an active-site residue. Asparagine 274 is a glycosylation site (N-linked (GlcNAc...) asparagine). A propeptide spanning residues leucine 325–histidine 339 is cleaved from the precursor.

As to quaternary structure, homodimer. In terms of processing, undergoes autocleavage which is necessary for activation of the protein. Highly expressed in stratified epithelia in skin, tongue, esophagus, forestomach and vagina. Also expressed in trachea, urinary bladder and thymus. Undetectable in simple epithelia. Within the epidermis, expressed exclusively in the granular layer (at protein level). Levels are elevated in benign skin tumors but are down-regulated in squamous cell carcinomas.

It is found in the membrane. In terms of biological role, protease responsible for filaggrin processing, essential for the maintenance of a proper epidermis organization. This chain is Retroviral-like aspartic protease 1, found in Mus musculus (Mouse).